Here is a 574-residue protein sequence, read N- to C-terminus: Proline--tRNA ligase (574 aa).

Belongs to the class-II aminoacyl-tRNA synthetase family. ProS type 1 subfamily. As to quaternary structure, homodimer.

The protein resides in the cytoplasm. The catalysed reaction is tRNA(Pro) + L-proline + ATP = L-prolyl-tRNA(Pro) + AMP + diphosphate. Its function is as follows. Catalyzes the attachment of proline to tRNA(Pro) in a two-step reaction: proline is first activated by ATP to form Pro-AMP and then transferred to the acceptor end of tRNA(Pro). As ProRS can inadvertently accommodate and process non-cognate amino acids such as alanine and cysteine, to avoid such errors it has two additional distinct editing activities against alanine. One activity is designated as 'pretransfer' editing and involves the tRNA(Pro)-independent hydrolysis of activated Ala-AMP. The other activity is designated 'posttransfer' editing and involves deacylation of mischarged Ala-tRNA(Pro). The misacylated Cys-tRNA(Pro) is not edited by ProRS. The protein is Proline--tRNA ligase of Nitratidesulfovibrio vulgaris (strain ATCC 29579 / DSM 644 / CCUG 34227 / NCIMB 8303 / VKM B-1760 / Hildenborough) (Desulfovibrio vulgaris).